Consider the following 361-residue polypeptide: Phospho-N-acetylmuramoyl-pentapeptide-transferase (361 aa).

Transmembrane regions (helical) follow at residues 28–48, 73–93, 98–118, 132–152, 168–188, 199–219, 235–255, 263–283, 288–308, and 338–358; these read LAIL…IRWL, TMGG…WGNL, MWIM…DDYL, YKLF…YFNP, WLID…VGSS, GLAA…LYIS, GTGE…GFLW, VFMG…LAVI, IVLA…ILQV, and KVIV…LLTL.

It belongs to the glycosyltransferase 4 family. MraY subfamily. Requires Mg(2+) as cofactor.

It localises to the cell inner membrane. The catalysed reaction is UDP-N-acetyl-alpha-D-muramoyl-L-alanyl-gamma-D-glutamyl-meso-2,6-diaminopimeloyl-D-alanyl-D-alanine + di-trans,octa-cis-undecaprenyl phosphate = di-trans,octa-cis-undecaprenyl diphospho-N-acetyl-alpha-D-muramoyl-L-alanyl-D-glutamyl-meso-2,6-diaminopimeloyl-D-alanyl-D-alanine + UMP. Its pathway is cell wall biogenesis; peptidoglycan biosynthesis. Catalyzes the initial step of the lipid cycle reactions in the biosynthesis of the cell wall peptidoglycan: transfers peptidoglycan precursor phospho-MurNAc-pentapeptide from UDP-MurNAc-pentapeptide onto the lipid carrier undecaprenyl phosphate, yielding undecaprenyl-pyrophosphoryl-MurNAc-pentapeptide, known as lipid I. The protein is Phospho-N-acetylmuramoyl-pentapeptide-transferase of Thermodesulfovibrio yellowstonii (strain ATCC 51303 / DSM 11347 / YP87).